The following is a 110-amino-acid chain: Protein RnfH (110 aa).

The tract at residues 86-110 is disordered; sequence RKRAAQQAKDQEEKKKAEKSANKEN. Residues 94 to 110 show a composition bias toward basic and acidic residues; that stretch reads KDQEEKKKAEKSANKEN.

Belongs to the UPF0125 (RnfH) family.

This Mannheimia succiniciproducens (strain KCTC 0769BP / MBEL55E) protein is Protein RnfH.